The primary structure comprises 145 residues: MAGRKGGDRKKAVTRSVKAGLQFPVGRIGRYLKKGRYAQRVGSGAPVYLAAVLEYLAAEVLELAGNAAKDNKKTRIIPRHLLLAVRNDQELGRLLAGVTIAHGGVIPNINSVLLPKKSPAAAEKEAKSQKAAAKSPKKKTAATKE.

The interval 118–145 (SPAAAEKEAKSQKAAAKSPKKKTAATKE) is disordered. Positions 135–138 (SPKK) match the SPKK motif motif. The segment covering 135-145 (SPKKKTAATKE) has biased composition (basic residues).

It belongs to the histone H2A family. The nucleosome is a histone octamer containing two molecules each of H2A, H2B, H3 and H4 assembled in one H3-H4 heterotetramer and two H2A-H2B heterodimers. The octamer wraps approximately 147 bp of DNA. Abundant in meristematic tissues.

Its subcellular location is the nucleus. The protein resides in the chromosome. Functionally, core component of nucleosome. Nucleosomes wrap and compact DNA into chromatin, limiting DNA accessibility to the cellular machineries which require DNA as a template. Histones thereby play a central role in transcription regulation, DNA repair, DNA replication and chromosomal stability. DNA accessibility is regulated via a complex set of post-translational modifications of histones, also called histone code, and nucleosome remodeling. The chain is Protein H2A.5 (H2A-2) from Triticum aestivum (Wheat).